The sequence spans 421 residues: Thymidine phosphorylase (421 aa).

It belongs to the thymidine/pyrimidine-nucleoside phosphorylase family. As to quaternary structure, homodimer.

The catalysed reaction is thymidine + phosphate = 2-deoxy-alpha-D-ribose 1-phosphate + thymine. Functionally, the enzymes which catalyze the reversible phosphorolysis of pyrimidine nucleosides are involved in the degradation of these compounds and in their utilization as carbon and energy sources, or in the rescue of pyrimidine bases for nucleotide synthesis. This is Thymidine phosphorylase (deoA) from Mycoplasma pneumoniae (strain ATCC 29342 / M129 / Subtype 1) (Mycoplasmoides pneumoniae).